Reading from the N-terminus, the 91-residue chain is Non-specific lipid-transfer protein 1 (91 aa).

Intrachain disulfides connect Cys-4/Cys-51, Cys-14/Cys-28, Cys-29/Cys-74, and Cys-49/Cys-88.

The protein belongs to the plant LTP family. In terms of tissue distribution, detected in seeds (at protein level).

Functionally, plant non-specific lipid-transfer proteins transfer phospholipids as well as galactolipids across membranes. May play a role in wax or cutin deposition in the cell walls of expanding epidermal cells and certain secretory tissues. The sequence is that of Non-specific lipid-transfer protein 1 from Carum carvi (Caraway).